The chain runs to 59 residues: Phycobilisome degradation protein NblA (59 aa).

This sequence to chloroplast ycf18.

Involved in phycobilisome (PBS) degradation during nutrient deprivation. May mark the PBS for degradation by covalent association with PBS components or may disrupt the PBS via ionic interactions. This is Phycobilisome degradation protein NblA from Synechococcus elongatus (strain ATCC 33912 / PCC 7942 / FACHB-805) (Anacystis nidulans R2).